We begin with the raw amino-acid sequence, 117 residues long: Colipase (117 aa).

An N-terminal signal peptide occupies residues 1 to 22 (MNIFNILLPIVVLLLVFGLTAA). Cystine bridges form between cysteine 39/cysteine 50, cysteine 45/cysteine 61, cysteine 49/cysteine 83, cysteine 71/cysteine 91, and cysteine 85/cysteine 109.

The protein belongs to the colipase family. As to quaternary structure, forms a 1:1 stoichiometric complex with pancreatic lipase.

The protein resides in the secreted. Its function is as follows. Colipase is a cofactor of pancreatic lipase. It allows the lipase to anchor itself to the lipid-water interface. Without colipase the enzyme is washed off by bile salts, which have an inhibitory effect on the lipase. The chain is Colipase (clps) from Xenopus tropicalis (Western clawed frog).